The following is a 285-amino-acid chain: Undecaprenyl-diphosphatase (285 aa).

7 helical membrane-spanning segments follow: residues 40-60 (GPLIDVAVHVGSLLAIIVYFF), 89-109 (LFWWIVLGTIPAVAFGLAIKL), 137-157 (DLIAFNLIVYGIALGLADWLG), 171-191 (GLIVGIAQALAIIPGTSRSGV), 209-229 (FSFLLSIPAVAGAGVLIVPEI), 241-261 (LIAGVLTFIAAFLTMAFLMNF), and 265-285 (ASMLVFVFYRVAMGCALLAFF).

It belongs to the UppP family.

The protein localises to the cell inner membrane. The enzyme catalyses di-trans,octa-cis-undecaprenyl diphosphate + H2O = di-trans,octa-cis-undecaprenyl phosphate + phosphate + H(+). Functionally, catalyzes the dephosphorylation of undecaprenyl diphosphate (UPP). Confers resistance to bacitracin. This is Undecaprenyl-diphosphatase from Erythrobacter litoralis (strain HTCC2594).